We begin with the raw amino-acid sequence, 760 residues long: MRYNQFSYIPTSLERAAEELKELGFDLDLQKTAKVNLESFLRKLFFHYPDSDYPLSHLITKNDMDALSFFQSEQELSKEVFDLLALQVLGFIPGVDFTEADAFLDKLAFPIHFDETEIIKHIHHILATRCKSGMTLIDDLVSQGMLTMDNDYHFFNGKSLATFDTSQLIREVVYVEAPLDTDQDGQLDLIKVNIIRPQSQKPLPTLMTPSPYHQGINEVANDKKLYRMEKELVVKKRRQITVEDRDFIPLETQPCKLPIGQNLEIFSYINSYSLNDYFLARGFANIYVSGVGTAGSTGFMTSGDYAQIESFKAVIDWLNGRATAYTSHSKTHQVRADWANGLVCTTGKSYLGTMSTGLATTGVDGLAMIIAESAISSWYNYYRENGLVCSPGGYPGEDLDVLTELTYSRNLLAGDYLRHNDRYQELLNQQSQALDRQSGDYNQFWHDRNYLKNAHQIKCDVVYTHGLQDWNVKPRQVYEIVNALPSTINKHLFLHQGEHVYMHNWQSIDFRESMNVLLCQKLLGLANDFSLPEMIWQDNTCPQNWQERKVFGTSTIKELDLGQELLLIDNHYGEDEFKAYGKDFRAFKAALFKGKANQALVDILLEEDLPINGEIVLQLKVKSSENKGLLSAQILDYGKKKRLGDLPIALTQSSIDNGQNFSREPLKELPFREDSYRVISKGFMNLQNRNNLSSIETIPNNKWMTVRLPLQPTIYHLEKGDTLRVILYTTDFEHTVRDNSNYALTIDLSQSQLIVPIASN.

Active-site charge relay system residues include Ser349, Asp469, and His499.

The protein belongs to the peptidase S15 family. In terms of assembly, homodimer.

It is found in the cytoplasm. It carries out the reaction Hydrolyzes Xaa-Pro-|- bonds to release unblocked, N-terminal dipeptides from substrates including Ala-Pro-|-p-nitroanilide and (sequentially) Tyr-Pro-|-Phe-Pro-|-Gly-Pro-|-Ile.. In terms of biological role, removes N-terminal dipeptides sequentially from polypeptides having unsubstituted N-termini provided that the penultimate residue is proline. The polypeptide is Xaa-Pro dipeptidyl-peptidase (Streptococcus pyogenes serotype M5 (strain Manfredo)).